A 302-amino-acid polypeptide reads, in one-letter code: Ornithine carbamoyltransferase (302 aa).

Carbamoyl phosphate-binding positions include 47–50 (STRT), Q74, R98, and 125–128 (HPCQ). L-ornithine-binding positions include N156, D220, and 224-225 (SM). Residues 260 to 261 (CL) and R288 contribute to the carbamoyl phosphate site.

The protein belongs to the aspartate/ornithine carbamoyltransferase superfamily. OTCase family.

The protein localises to the cytoplasm. It carries out the reaction carbamoyl phosphate + L-ornithine = L-citrulline + phosphate + H(+). Its pathway is amino-acid biosynthesis; L-arginine biosynthesis; L-arginine from L-ornithine and carbamoyl phosphate: step 1/3. In terms of biological role, reversibly catalyzes the transfer of the carbamoyl group from carbamoyl phosphate (CP) to the N(epsilon) atom of ornithine (ORN) to produce L-citrulline. The protein is Ornithine carbamoyltransferase of Methanosphaera stadtmanae (strain ATCC 43021 / DSM 3091 / JCM 11832 / MCB-3).